Consider the following 500-residue polypeptide: Cytochrome P450 71B9 (500 aa).

The helical transmembrane segment at 1–21 threads the bilayer; that stretch reads MATIWFLSLLFLCCILLAAFK. Cys-440 provides a ligand contact to heme.

Belongs to the cytochrome P450 family. Requires heme as cofactor.

The protein resides in the membrane. The protein is Cytochrome P450 71B9 (CYP71B9) of Arabidopsis thaliana (Mouse-ear cress).